We begin with the raw amino-acid sequence, 324 residues long: o-succinylbenzoate synthase (324 aa).

K135 (proton donor) is an active-site residue. Residues D163, E192, and D215 each contribute to the Mg(2+) site. K237 acts as the Proton acceptor in catalysis.

It belongs to the mandelate racemase/muconate lactonizing enzyme family. MenC type 1 subfamily. The cofactor is a divalent metal cation.

It carries out the reaction (1R,6R)-6-hydroxy-2-succinyl-cyclohexa-2,4-diene-1-carboxylate = 2-succinylbenzoate + H2O. The protein operates within quinol/quinone metabolism; 1,4-dihydroxy-2-naphthoate biosynthesis; 1,4-dihydroxy-2-naphthoate from chorismate: step 4/7. Its pathway is quinol/quinone metabolism; menaquinone biosynthesis. Its function is as follows. Converts 2-succinyl-6-hydroxy-2,4-cyclohexadiene-1-carboxylate (SHCHC) to 2-succinylbenzoate (OSB). The protein is o-succinylbenzoate synthase of Aliivibrio fischeri (strain MJ11) (Vibrio fischeri).